The chain runs to 292 residues: 4-hydroxy-tetrahydrodipicolinate synthase (292 aa).

Thr-44 contacts pyruvate. Residue Tyr-132 is the Proton donor/acceptor of the active site. Residue Lys-160 is the Schiff-base intermediate with substrate of the active site. Ile-202 serves as a coordination point for pyruvate.

The protein belongs to the DapA family. In terms of assembly, homotetramer; dimer of dimers.

It localises to the cytoplasm. The catalysed reaction is L-aspartate 4-semialdehyde + pyruvate = (2S,4S)-4-hydroxy-2,3,4,5-tetrahydrodipicolinate + H2O + H(+). The protein operates within amino-acid biosynthesis; L-lysine biosynthesis via DAP pathway; (S)-tetrahydrodipicolinate from L-aspartate: step 3/4. Its function is as follows. Catalyzes the condensation of (S)-aspartate-beta-semialdehyde [(S)-ASA] and pyruvate to 4-hydroxy-tetrahydrodipicolinate (HTPA). The sequence is that of 4-hydroxy-tetrahydrodipicolinate synthase from Magnetococcus marinus (strain ATCC BAA-1437 / JCM 17883 / MC-1).